Here is a 273-residue protein sequence, read N- to C-terminus: Large ribosomal subunit protein uL2 (273 aa).

Disordered regions lie at residues 28 to 55 and 222 to 273; these read TPEKSLTRGKPAKAGRGAGGRISVRHRG and GMAM…SKRK. Over residues 255–273 the composition is skewed to basic residues; sequence YKTRKKRRVSDRFIVSKRK.

The protein belongs to the universal ribosomal protein uL2 family. Part of the 50S ribosomal subunit. Forms a bridge to the 30S subunit in the 70S ribosome.

Its function is as follows. One of the primary rRNA binding proteins. Required for association of the 30S and 50S subunits to form the 70S ribosome, for tRNA binding and peptide bond formation. It has been suggested to have peptidyltransferase activity; this is somewhat controversial. Makes several contacts with the 16S rRNA in the 70S ribosome. In Treponema pallidum (strain Nichols), this protein is Large ribosomal subunit protein uL2.